The chain runs to 632 residues: tRNA uridine 5-carboxymethylaminomethyl modification enzyme MnmG (632 aa).

14–19 is a binding site for FAD; the sequence is GAGHAG. 273–287 provides a ligand contact to NAD(+); the sequence is GPRYCPSFEDKIMRF.

The protein belongs to the MnmG family. Homodimer. Heterotetramer of two MnmE and two MnmG subunits. FAD serves as cofactor.

Its subcellular location is the cytoplasm. NAD-binding protein involved in the addition of a carboxymethylaminomethyl (cmnm) group at the wobble position (U34) of certain tRNAs, forming tRNA-cmnm(5)s(2)U34. The chain is tRNA uridine 5-carboxymethylaminomethyl modification enzyme MnmG from Clostridium novyi (strain NT).